Reading from the N-terminus, the 804-residue chain is Phenylalanine--tRNA ligase beta subunit (804 aa).

The region spanning 40-155 (GEGIKGVVIG…GDAETGADAL (116 aa)) is the tRNA-binding domain. The B5 domain occupies 409-484 (IKENVIRLSV…RLYGYDNIPS (76 aa)). The Mg(2+) site is built by Asp-462, Asp-468, Glu-471, and Glu-472. The FDX-ACB domain occupies 710-803 (PKYPSVTRDI…LEDKYQAVLR (94 aa)).

It belongs to the phenylalanyl-tRNA synthetase beta subunit family. Type 1 subfamily. In terms of assembly, tetramer of two alpha and two beta subunits. Mg(2+) serves as cofactor.

The protein localises to the cytoplasm. The catalysed reaction is tRNA(Phe) + L-phenylalanine + ATP = L-phenylalanyl-tRNA(Phe) + AMP + diphosphate + H(+). This is Phenylalanine--tRNA ligase beta subunit from Bacillus licheniformis (strain ATCC 14580 / DSM 13 / JCM 2505 / CCUG 7422 / NBRC 12200 / NCIMB 9375 / NCTC 10341 / NRRL NRS-1264 / Gibson 46).